The primary structure comprises 202 residues: Ion-translocating oxidoreductase complex subunit G (202 aa).

The helical transmembrane segment at 11 to 31 (AILLALIALICTALSTGIYLL) threads the bilayer. Residue Thr-177 is modified to FMN phosphoryl threonine.

The protein belongs to the RnfG family. As to quaternary structure, the complex is composed of six subunits: RnfA, RnfB, RnfC, RnfD, RnfE and RnfG. FMN is required as a cofactor.

The protein localises to the cell inner membrane. In terms of biological role, part of a membrane-bound complex that couples electron transfer with translocation of ions across the membrane. The sequence is that of Ion-translocating oxidoreductase complex subunit G from Pasteurella multocida (strain Pm70).